Reading from the N-terminus, the 92-residue chain is Ribonuclease P protein component 1 (92 aa).

Belongs to the eukaryotic/archaeal RNase P protein component 1 family. As to quaternary structure, consists of a catalytic RNA component and at least 4-5 protein subunits.

The protein localises to the cytoplasm. It catalyses the reaction Endonucleolytic cleavage of RNA, removing 5'-extranucleotides from tRNA precursor.. In terms of biological role, part of ribonuclease P, a protein complex that generates mature tRNA molecules by cleaving their 5'-ends. In Staphylothermus marinus (strain ATCC 43588 / DSM 3639 / JCM 9404 / F1), this protein is Ribonuclease P protein component 1.